The sequence spans 142 residues: MTVGARLRSKAESSLLRRGPRGRGRTEGDEEAAAILEHLEYADEAEAAAESGTSAADERGPGTRGARRVHFALLPERYEPLEEPAPSEQPRKRYRRKLKKYGKNVGKVIIKGCRYVVIGLQGFAAAYSAPFAVATSVVSFVR.

Disordered regions lie at residues 1–32 (MTVGARLRSKAESSLLRRGPRGRGRTEGDEEA) and 46–66 (EAAAESGTSAADERGPGTRGA). Residues 116-138 (VVIGLQGFAAAYSAPFAVATSVV) traverse the membrane as a helical segment.

It localises to the membrane. Regulates drug efflux through modulation of ABCB1 localization and activity. This Homo sapiens (Human) protein is Required for drug-induced death protein 1.